The following is a 622-amino-acid chain: Intermediate filament protein ifc-2 (622 aa).

A head region spans residues 19–54; the sequence is SGTYASGFGQLVSGMSSAGAICTTQIRDAREREKRE. Positions 51–399 constitute an IF rod domain; the sequence is EKREIGLLND…ILLNGANVTT (349 aa). A coil 1A region spans residues 55–86; sequence IGLLNDRLADYIEKVRFLEAQNRCLSHDIDIL. The tract at residues 87 to 99 is linker 1; sequence RNGFSGGGHVSGL. Residues 100–237 form a coil 1B region; that stretch reads FDAEINQAKH…TENNVRIEQE (138 aa). Residues 238–255 are linker 12; that stretch reads LVFIRRDTTADNRDYFRH. Residues 256–399 are coil 2; it reads ELQAAIRDIR…ILLNGANVTT (144 aa). The interval 400–550 is tail; that stretch reads YTSNTHGSGS…RVDVGGFRIE (151 aa). The 114-residue stretch at 509-622 folds into the LTD domain; sequence SGRHFHSWYL…EERAWFVYLD (114 aa).

The protein belongs to the intermediate filament family. As to expression, expressed in intestinal cells and at desmosomes in intestine and pharynx of the larva.

It is found in the cytoplasm. Cytoplasmic intermediate filaments provide mechanical strength to cells. Not essential protein, although its absence leads to mild defects in locomotion. This chain is Intermediate filament protein ifc-2 (ifc-2), found in Caenorhabditis elegans.